The following is a 250-amino-acid chain: MAVTKLVLVRHGESQWNNENRFTGWYDVDLSEKGVSEAKAAGKLLKAEGFSFDFAYTSVLKRAIHTLWNVLDELDQAWLPVEKSWKLNERHYGALQGLNKAETAEKYGDEQVKQWRRGFAVTPPELTKDDERYPGHDPRYAKLTDAELPTTESLALTIDRVVPYWNETILPRLKSGERVIIAAHGNSLRALVKYLDNMGEDEILELNIPTGVPLVYEFDENFKPIKHYYLGNAEEIAAKAAAVANQGKAK.

Substrate-binding positions include 10–17, 23–24, Arg62, 89–92, Lys100, 116–117, and 185–186; these read RHGESQWN, TG, ERHY, RR, and GN. His11 (tele-phosphohistidine intermediate) is an active-site residue. Glu89 serves as the catalytic Proton donor/acceptor.

This sequence belongs to the phosphoglycerate mutase family. BPG-dependent PGAM subfamily. In terms of assembly, homodimer.

The catalysed reaction is (2R)-2-phosphoglycerate = (2R)-3-phosphoglycerate. It participates in carbohydrate degradation; glycolysis; pyruvate from D-glyceraldehyde 3-phosphate: step 3/5. Its function is as follows. Catalyzes the interconversion of 2-phosphoglycerate and 3-phosphoglycerate. This Klebsiella pneumoniae (strain 342) protein is 2,3-bisphosphoglycerate-dependent phosphoglycerate mutase.